A 447-amino-acid polypeptide reads, in one-letter code: Zinc finger protein ZIC 1 (447 aa).

The C2H2-type 1; atypical zinc-finger motif lies at 225-260 (LICKWIEPEQLANPKKSCNKTFSTMHELVTHVTVEH). The segment at 269–296 (HICFWEECPREGKPFKAKYKLVNHIRVH) adopts a C2H2-type 2; atypical zinc-finger fold. 3 C2H2-type zinc fingers span residues 302-326 (FPCPFPGCGKVFARSENLKIHKRTH), 332-356 (FKCEFEGCDRRFANSSDRKKHMHVH), and 362-384 (YLCKMCDKSYTHPSSLRKHMKVH). The disordered stretch occupies residues 375 to 431 (SSLRKHMKVHESSSQGSQPSPAASSGYESSTPPTIVSPSTDNPTTSSLSPSSSAVHH). A compositionally biased stretch (low complexity) spans 386-427 (SSSQGSQPSPAASSGYESSTPPTIVSPSTDNPTTSSLSPSSS).

Belongs to the GLI C2H2-type zinc-finger protein family. As to quaternary structure, interacts (via the C2H2-type domains 3, 4 and 5) with MDFIC (via the C2H2-type domains 3, 4 and 5). Interacts with GLI1; the interaction enhances transcription activation. Interacts with GLI2. Interacts with GLI3; the interaction enhances transcription activation. CNS. A high level expression is seen in the cerebellum. Detected in the nuclei of the cerebellar granule cell lineage from the progenitor cells of the external germinal layer to the postmigrated cells of the internal granular layer. Detected in medulloblastoma (26/29 cases), but not present in all other tumors examined.

It is found in the nucleus. The protein localises to the cytoplasm. In terms of biological role, acts as a transcriptional activator. Involved in neurogenesis. Plays important roles in the early stage of organogenesis of the CNS, as well as during dorsal spinal cord development and maturation of the cerebellum. Involved in the spatial distribution of mossy fiber (MF) neurons within the pontine gray nucleus (PGN). Plays a role in the regulation of MF axon pathway choice. Promotes MF migration towards ipsilaterally-located cerebellar territories. May have a role in shear flow mechanotransduction in osteocytes. Retains nuclear GLI1 and GLI3 in the cytoplasm. Binds to the minimal GLI-consensus sequence 5'-TGGGTGGTC-3'. This Homo sapiens (Human) protein is Zinc finger protein ZIC 1 (ZIC1).